A 394-amino-acid polypeptide reads, in one-letter code: Probable dual specificity protein phosphatase DDB_G0281963 (394 aa).

In terms of domain architecture, Tyrosine-protein phosphatase spans 2 to 142; sequence NDVSRIFPGF…LKKYELILKK (141 aa). The active-site Phosphocysteine intermediate is the C86. The segment at 147–191 is disordered; it reads PQIVEKESEEEDDDEDDDDDDYDSDEDDDDDSEDDDFEEEFDNVV. Over residues 153-188 the composition is skewed to acidic residues; sequence ESEEEDDDEDDDDDDYDSDEDDDDDSEDDDFEEEFD.

This sequence belongs to the protein-tyrosine phosphatase family. Non-receptor class dual specificity subfamily.

It carries out the reaction O-phospho-L-tyrosyl-[protein] + H2O = L-tyrosyl-[protein] + phosphate. The enzyme catalyses O-phospho-L-seryl-[protein] + H2O = L-seryl-[protein] + phosphate. It catalyses the reaction O-phospho-L-threonyl-[protein] + H2O = L-threonyl-[protein] + phosphate. In terms of biological role, has a dual specificity toward Ser/Thr and Tyr-containing proteins. This is Probable dual specificity protein phosphatase DDB_G0281963 from Dictyostelium discoideum (Social amoeba).